We begin with the raw amino-acid sequence, 72 residues long: Long neurotoxin OH-5 (72 aa).

5 cysteine pairs are disulfide-bonded: C3–C22, C15–C43, C28–C32, C47–C58, and C59–C64.

The protein belongs to the three-finger toxin family. Long-chain subfamily. Type II alpha-neurotoxin sub-subfamily. As to expression, expressed by the venom gland.

It localises to the secreted. Binds with high affinity to muscular (alpha-1/CHRNA1) and neuronal (alpha-7/CHRNA7) nicotinic acetylcholine receptor (nAChR) and inhibits acetylcholine from binding to the receptor, thereby impairing neuromuscular and neuronal transmission. This is Long neurotoxin OH-5 from Ophiophagus hannah (King cobra).